The sequence spans 887 residues: Pre-mRNA-splicing factor cwf22 (887 aa).

Residues 1-27 (MEKEDKSFGIGMLDYNRENPESSGHSR) form a disordered region. In terms of domain architecture, MIF4G spans 124–307 (KKSINGLINK…EVLFQTRKDK (184 aa)). Residues 366–401 (ILGEEDDDENEEDEEDSEETSESEEDESVNDEKPQV) are disordered. A compositionally biased stretch (acidic residues) spans 368–394 (GEEDDDENEEDEEDSEETSESEEDESV). In terms of domain architecture, MI spans 411–527 (NLRKSIYLTI…GWEVYDCVRL (117 aa)). Disordered stretches follow at residues 607–834 (MPKS…KTYH) and 867–887 (GELY…PRAD). Positions 618 to 662 (EGYSSGSETGSTYSSSYSSTYSRGRSYSRSTRSYSKSRSYSRSRS) are enriched in low complexity. Ser-662 carries the phosphoserine modification. A Phosphothreonine modification is found at Thr-664. A compositionally biased stretch (basic and acidic residues) spans 677–690 (KDRELSPRGRERSS). A compositionally biased stretch (low complexity) spans 691–712 (NRNSYSDLSRSSSLSRGRSRSY). Positions 717-726 (RLIESEDKGY) are enriched in basic and acidic residues. The segment covering 736 to 746 (RKYRSRQRYRR) has biased composition (basic residues). Low complexity-rich tracts occupy residues 747–762 (SYAG…SRSP) and 769–791 (SMSC…SRSP). Positions 799 to 809 (DSLSYNRQYSP) are enriched in polar residues.

This sequence belongs to the CWC22 family. Belongs to the 40S cdc5-associated complex (or cwf complex), a spliceosome sub-complex reminiscent of a late-stage spliceosome composed of the U2, U5 and U6 snRNAs and at least brr2, cdc5, cwf2/prp3, cwf3/syf1, cwf4/syf3, cwf5/ecm2, spp42/cwf6, cwf7/spf27, cwf8, cwf9, cwf10, cwf11, cwf12, prp45/cwf13, cwf14, cwf15, cwf16, cwf17, cwf18, cwf19, cwf20, cwf21, cwf22, cwf23, cwf24, cwf25, cwf26, cyp7/cwf27, cwf28, cwf29/ist3, lea1, msl1, prp5/cwf1, prp10, prp12/sap130, prp17, prp22, sap61, sap62, sap114, sap145, slu7, smb1, smd1, smd3, smf1, smg1 and syf2.

The protein localises to the cytoplasm. It localises to the nucleus. Functionally, may be involved in pre-mRNA splicing. The sequence is that of Pre-mRNA-splicing factor cwf22 (cwf22) from Schizosaccharomyces pombe (strain 972 / ATCC 24843) (Fission yeast).